The following is a 369-amino-acid chain: MSTGLRYKSKLATPEDKQDIDKQYVGFATLPNQVHRKSVKKGFDFTLMVAGESGLGKSTLVHSLFLTDLYKDRKLLSAEERINQTVEILKHTVDIEEKGVKLKLTIVDTPGFGDAVNNFECWKPITDYVDQQFEQYFRDESGLNRKNIQDNRVHCCLYFISPFGHGLRPVDVGFMKALHEKVNIVPLIAKADCLVPSEIRKLKDRIREEIDKFGIHVYQFPECDSDEDEDFKQQDRELKESAPFAVIGSNTVVEAKGQRVRGRLYPWGIVEVENQAHCDFVKLRNMLIRTHMHDLKDVTCDVHYENYRAHCIQQMTSKLTQDSRMESPIPILPLPTPDSETEKLIRMKDEELRRMQEMLQKMKQRMQDQ.

Position 13 is a phosphothreonine (Thr-13). Residues 41 to 314 (KGFDFTLMVA…ENYRAHCIQQ (274 aa)) enclose the Septin-type G domain. The interval 51–58 (GESGLGKS) is G1 motif. GTP is bound by residues 51-58 (GESGLGKS), Thr-85, and Gly-111. The G3 motif stretch occupies residues 108–111 (DTPG). At Arg-168 the chain carries Omega-N-methylarginine. Positions 189–192 (AKAD) are G4 motif. 190-198 (KADCLVPSE) is a GTP binding site. Position 225 is a phosphoserine (Ser-225). GTP contacts are provided by Gly-248 and Arg-263. Phosphoserine is present on Ser-327. Residue Thr-336 is modified to Phosphothreonine. A coiled-coil region spans residues 338–369 (DSETEKLIRMKDEELRRMQEMLQKMKQRMQDQ).

This sequence belongs to the TRAFAC class TrmE-Era-EngA-EngB-Septin-like GTPase superfamily. Septin GTPase family. Septins polymerize into heterooligomeric protein complexes that form filaments, and can associate with cellular membranes, actin filaments and microtubules. GTPase activity is required for filament formation. Interacts with SEPTIN2 and SEPTIN5. In platelets, associated with a complex containing STX4. Interacts with PRKN; this interaction leads to SEPTIN5 ubiquitination and degradation. Interacts with DYRK1A. Interacts with STX1A; in the cerebellar cortex. Phosphorylated by DYRK1A. In terms of tissue distribution, expressed in brain and testis and at lower level in heart, spleen, lung and kidney.

It is found in the cytoplasm. It localises to the cytoskeleton. Filament-forming cytoskeletal GTPase. May play a role in cytokinesis (Potential). May play a role in platelet secretion. The polypeptide is Septin-5 (Rattus norvegicus (Rat)).